We begin with the raw amino-acid sequence, 147 residues long: D-aminoacyl-tRNA deacylase (147 aa).

A Gly-cisPro motif, important for rejection of L-amino acids motif is present at residues 136 to 137; it reads GP.

The protein belongs to the DTD family. In terms of assembly, homodimer.

It localises to the cytoplasm. It carries out the reaction glycyl-tRNA(Ala) + H2O = tRNA(Ala) + glycine + H(+). The catalysed reaction is a D-aminoacyl-tRNA + H2O = a tRNA + a D-alpha-amino acid + H(+). An aminoacyl-tRNA editing enzyme that deacylates mischarged D-aminoacyl-tRNAs. Also deacylates mischarged glycyl-tRNA(Ala), protecting cells against glycine mischarging by AlaRS. Acts via tRNA-based rather than protein-based catalysis; rejects L-amino acids rather than detecting D-amino acids in the active site. By recycling D-aminoacyl-tRNA to D-amino acids and free tRNA molecules, this enzyme counteracts the toxicity associated with the formation of D-aminoacyl-tRNA entities in vivo and helps enforce protein L-homochirality. The sequence is that of D-aminoacyl-tRNA deacylase from Streptococcus pyogenes serotype M1.